Consider the following 673-residue polypeptide: Gametogenetin (673 aa).

The disordered stretch occupies residues Met-1 to Gly-599. Over residues Ser-14 to Pro-30 the composition is skewed to basic and acidic residues. Residues Ala-70–Ser-83 show a composition bias toward low complexity. The segment at Arg-125–Pro-506 is interaction with GGNBP1. The segment covering Pro-161–Pro-178 has biased composition (pro residues). The segment covering Leu-192–Ser-202 has biased composition (polar residues). The segment covering Ser-257–Pro-268 has biased composition (low complexity). A Phosphoserine modification is found at Ser-399. Residues Pro-413–Pro-424 show a composition bias toward low complexity. A compositionally biased stretch (pro residues) spans Arg-438 to Pro-475. Residues Leu-504 to Ala-531 show a composition bias toward low complexity. The segment at Asp-511–Thr-673 is interactions with ZNF403/GGNBP2 and OAZ3. The segment covering Thr-542 to Arg-551 has biased composition (basic residues).

Isoform 1 and isoform 3 interact with FANCL. Isoform 1 interacts with GGNBP1, ZNF403/GGNBP2 and OAZ3. Isoform 2 interacts with GGNBP1. As to expression, testis-specific. Specifically expressed in the germ cells and not in the somatic, Sertoli, or Leydig cells. In adult testis, expression starts in stage VIII pachytene spermatocytes, increases in stage IX and X pachytene spermatocytes, and culminates in stage XI diplotene spermatocytes and the meiotic cells in stage XII. Expression decreases slightly in step 1-3 spermatids, further decreases in step 4-11 spermatids, and is no longer detectable in step 12 spermatids and beyond. Isoform 2 is mainly expressed in testis.

Its subcellular location is the cytoplasm. It localises to the perinuclear region. The protein localises to the cytoplasmic vesicle. It is found in the nucleus. The protein resides in the nucleolus. Its function is as follows. May be involved in spermatogenesis. The chain is Gametogenetin (Ggn) from Mus musculus (Mouse).